The primary structure comprises 102 residues: Co-chaperonin GroES (102 aa).

It belongs to the GroES chaperonin family. In terms of assembly, heptamer of 7 subunits arranged in a ring. Interacts with the chaperonin GroEL.

It is found in the cytoplasm. Together with the chaperonin GroEL, plays an essential role in assisting protein folding. The GroEL-GroES system forms a nano-cage that allows encapsulation of the non-native substrate proteins and provides a physical environment optimized to promote and accelerate protein folding. GroES binds to the apical surface of the GroEL ring, thereby capping the opening of the GroEL channel. In Streptomyces avermitilis (strain ATCC 31267 / DSM 46492 / JCM 5070 / NBRC 14893 / NCIMB 12804 / NRRL 8165 / MA-4680), this protein is Co-chaperonin GroES.